The following is a 506-amino-acid chain: Cytochrome P450 94B3 (506 aa).

The helical transmembrane segment at 2–22 (AFLLSFLILAFLITIIFFLSS) threads the bilayer. Position 447 (Cys-447) interacts with heme.

The protein belongs to the cytochrome P450 family. Heme serves as cofactor.

The protein resides in the membrane. It localises to the endoplasmic reticulum membrane. The enzyme catalyses a jasmonyl-L-amino acid + reduced [NADPH--hemoprotein reductase] + O2 = a 12-hydroxyjasmonyl-L-alpha-amino acid + oxidized [NADPH--hemoprotein reductase] + H2O + H(+). It carries out the reaction L-isoleucine-(+)-7-isojasmonate + NADPH + O2 + H(+) = L-isoleucine-(+)-12-hydroxy-7-isojasmonate + NADP(+) + H2O. It catalyses the reaction a jasmonyl-L-isoleucinate + NADPH + O2 + H(+) = L-isoleucine-12-hydroxyjasmonate + NADP(+) + H2O. Functionally, hydroxylase involved in the oxidation of the plant hormone jasmonoyl-L-isoleucine (JA-Ile), a bioactive phytohormone of the jasmonate-mediated signaling pathway. Converts JA-Ile to 12-hydroxy-JA-Ile. Exerts negative feedback control on JA-Ile levels and plays a key role in attenuation of jasmonate responses. Negatively regulates the expression of wound-induced genes TIFY11A/JAZ5, TIFY5A/JAZ8 and TIFY5A/JAZ10. Catalyzes the hydroxylation of jasmonoyl-L-valine (JA-Val), jasmonoyl-L-leucine (JA-Leu) and jasmonoyl-L-phenylalanine (JA-Phe) in vitro. Converts JA-Val, JA-Leu and JA-Phe to 12-hydroxy-JA-Val, 12-hydroxy-JA-Leu and 12-hydroxy-JA-Phe, respectively. This Arabidopsis thaliana (Mouse-ear cress) protein is Cytochrome P450 94B3.